We begin with the raw amino-acid sequence, 479 residues long: MTVTTSSPTTAEGRTPGIGRVARVIGPVVDVEFAPDELPEIYTALHVDRTIDGETAVLTLEVAQHIGDNTIRAISMQQTDGLVRGAPVRDTGAPISVPVGNATKGHVFNVLGNPLDVDKVDAETYWPIHRSAPAFDQLESKTEMFTTGIKVIDLLAPYVRGGKIGLMGGAGVGKTVIIQEMIRRVAKEFGGVSVFAGVGERTREGNDLFLEMTEAGVIEDTALVFGQMDEPPGTRLRVALGALTMAEYFRDVQKQDVLLFIDNIFRFTQAGSEVSTLLGRMPSAVGYQPTLADEMGALQERITSTRGHSITSLQAIYVPADDLTDPAPATTFTHLDANTVLDRAISDLGIYPAVSPLDSNSRILDARYIGQEHYDTAREVQRILQRYKDLQDIIAILGIDELSEEDKILVNRARRIQRFLSQPFFVAEQFTGIPGKFVPLDETIDSFRRLTQGDYDHLPEQAFFMCGGIEDAEKNAENL.

Residue 168–175 coordinates ATP; that stretch reads GGAGVGKT.

The protein belongs to the ATPase alpha/beta chains family. In terms of assembly, F-type ATPases have 2 components, CF(1) - the catalytic core - and CF(0) - the membrane proton channel. CF(1) has five subunits: alpha(3), beta(3), gamma(1), delta(1), epsilon(1). CF(0) has three main subunits: a(1), b(2) and c(9-12). The alpha and beta chains form an alternating ring which encloses part of the gamma chain. CF(1) is attached to CF(0) by a central stalk formed by the gamma and epsilon chains, while a peripheral stalk is formed by the delta and b chains.

The protein resides in the cell membrane. It catalyses the reaction ATP + H2O + 4 H(+)(in) = ADP + phosphate + 5 H(+)(out). In terms of biological role, produces ATP from ADP in the presence of a proton gradient across the membrane. The catalytic sites are hosted primarily by the beta subunits. The protein is ATP synthase subunit beta of Parafrankia sp. (strain EAN1pec).